The chain runs to 282 residues: 1-deoxy-11-beta-hydroxypentalenate dehydrogenase (282 aa).

Position 12-36 (12-36) interacts with NAD(+); sequence GAASGIGLALSARFARAGAGVVMAD. Substrate is bound at residue S144. Y157 serves as the catalytic Proton acceptor. K161 is a binding site for NAD(+). The tract at residues 258–282 is disordered; the sequence is PPPSPEEELWPVPKTTTATTATTKH. Positions 267-282 are enriched in low complexity; the sequence is WPVPKTTTATTATTKH.

It belongs to the short-chain dehydrogenases/reductases (SDR) family.

The catalysed reaction is 1-deoxy-11beta-hydroxypentalenate + NAD(+) = 1-deoxy-11-oxopentalenate + NADH + H(+). The protein operates within antibiotic biosynthesis; pentalenolactone biosynthesis. In terms of biological role, catalyzes the oxidation of 1-deoxy-11-beta-hydroxypentalenic acid to 1-deoxy-11-oxopentalenic acid in the biosynthesis of pentalenolactone antibiotic. The sequence is that of 1-deoxy-11-beta-hydroxypentalenate dehydrogenase (pntF) from Streptomyces arenae.